The chain runs to 273 residues: Rhamnulose-1-phosphate aldolase (273 aa).

Glu-117 is a catalytic residue. Zn(2+) contacts are provided by His-140, His-142, and His-211.

It belongs to the aldolase class II family. RhaD subfamily. The cofactor is Zn(2+).

It localises to the cytoplasm. The enzyme catalyses L-rhamnulose 1-phosphate = (S)-lactaldehyde + dihydroxyacetone phosphate. Its pathway is carbohydrate degradation; L-rhamnose degradation; glycerone phosphate from L-rhamnose: step 3/3. Catalyzes the reversible cleavage of L-rhamnulose-1-phosphate to dihydroxyacetone phosphate (DHAP) and L-lactaldehyde. This is Rhamnulose-1-phosphate aldolase from Listeria innocua serovar 6a (strain ATCC BAA-680 / CLIP 11262).